A 291-amino-acid chain; its full sequence is Small ribosomal subunit protein uS2 (291 aa).

The segment at 241-270 (KREPRQINRPVMSSENQAEQQTSVANENVQ) is disordered. The segment covering 251–270 (VMSSENQAEQQTSVANENVQ) has biased composition (polar residues).

The protein belongs to the universal ribosomal protein uS2 family.

This Mycoplasma capricolum subsp. capricolum (strain California kid / ATCC 27343 / NCTC 10154) protein is Small ribosomal subunit protein uS2.